Here is a 787-residue protein sequence, read N- to C-terminus: Signal transducer and activator of transcription 5B (787 aa).

The residue at position 90 (tyrosine 90) is a Phosphotyrosine. Serine 128 carries the phosphoserine modification. An SH2 domain is found at 589–686 (WNDGAILGFV…EVYSKYYTPV (98 aa)). Tyrosine 682 carries the phosphotyrosine modification. Phosphotyrosine; by HCK, JAK and PTK6 is present on tyrosine 699.

The protein belongs to the transcription factor STAT family. As to quaternary structure, upon activation, forms a homodimer or a heterodimer with a related family member. Binds NR3C1. Interacts with NCOA1. Interacts with NMI. Interacts with SOCS7. Interacts (via SH2 domain) with INSR. Interacts with CPEB3; this inhibits STAT5B-mediated transcriptional activation. Tyrosine phosphorylated in response to signaling via activated KIT, resulting in translocation to the nucleus. Tyrosine phosphorylated in response to signaling via activated FLT3; wild-type FLT3 results in much weaker phosphorylation than constitutively activated mutant FLT3. Alternatively, can be phosphorylated by JAK2. Phosphorylation at Tyr-699 by PTK6 or HCK leads to an increase of its transcriptional activity.

It localises to the cytoplasm. The protein localises to the nucleus. Its function is as follows. Carries out a dual function: signal transduction and activation of transcription. Mediates cellular responses to the cytokine KITLG/SCF and other growth factors. Binds to the GAS element and activates PRL-induced transcription. Positively regulates hematopoietic/erythroid differentiation. The protein is Signal transducer and activator of transcription 5B (STAT5B) of Sus scrofa (Pig).